Here is a 194-residue protein sequence, read N- to C-terminus: Large ribosomal subunit protein bL9 (194 aa).

Residues 167 to 194 (EDRAAEAEAASDMAAGGAGSFEGDHYES) are disordered.

This sequence belongs to the bacterial ribosomal protein bL9 family.

Functionally, binds to the 23S rRNA. In Caulobacter sp. (strain K31), this protein is Large ribosomal subunit protein bL9.